A 442-amino-acid polypeptide reads, in one-letter code: ATP-dependent protease ATPase subunit HslU (442 aa).

ATP contacts are provided by residues Ile18 and 60–65 (GVGKTE). Residues 133–156 (DALLPKPKNDWDNTDSDTSSNTRQ) are disordered. ATP is bound by residues Asp255, Glu320, and Arg392.

This sequence belongs to the ClpX chaperone family. HslU subfamily. As to quaternary structure, a double ring-shaped homohexamer of HslV is capped on each side by a ring-shaped HslU homohexamer. The assembly of the HslU/HslV complex is dependent on binding of ATP.

The protein localises to the cytoplasm. Functionally, ATPase subunit of a proteasome-like degradation complex; this subunit has chaperone activity. The binding of ATP and its subsequent hydrolysis by HslU are essential for unfolding of protein substrates subsequently hydrolyzed by HslV. HslU recognizes the N-terminal part of its protein substrates and unfolds these before they are guided to HslV for hydrolysis. This chain is ATP-dependent protease ATPase subunit HslU, found in Shewanella sp. (strain ANA-3).